We begin with the raw amino-acid sequence, 187 residues long: GTP cyclohydrolase 1 (187 aa).

Positions 81, 84, and 152 each coordinate Zn(2+).

It belongs to the GTP cyclohydrolase I family. As to quaternary structure, homomer.

It catalyses the reaction GTP + H2O = 7,8-dihydroneopterin 3'-triphosphate + formate + H(+). It functions in the pathway cofactor biosynthesis; 7,8-dihydroneopterin triphosphate biosynthesis; 7,8-dihydroneopterin triphosphate from GTP: step 1/1. The sequence is that of GTP cyclohydrolase 1 from Pyrobaculum neutrophilum (strain DSM 2338 / JCM 9278 / NBRC 100436 / V24Sta) (Thermoproteus neutrophilus).